The sequence spans 237 residues: UPF0173 metal-dependent hydrolase HQ_3368A (237 aa).

This sequence belongs to the UPF0173 family.

The chain is UPF0173 metal-dependent hydrolase HQ_3368A from Haloquadratum walsbyi (strain DSM 16790 / HBSQ001).